The chain runs to 1949 residues: MVLTLCFHSDRDHHFLSTLPLAEIRRLAPGGFSVFVPEDLLPHLSPSPSCPTPPLPRELTWSAACNPTNFPHLFRHHRPPPPCTRLTPRPPPPTPAPPSASTLPRVFHGGAPPAAFQPAIDFLHNTIQKDTIASSIIAALNPSLTSSLTLYPYALPPRWPSALNQAGIPATSYGHQSHPHPIHKTIETHLLHEHWANRATLPSTVMFMKRSKFDKLRVSNAALVKSASNFLHLLNPILTARDADRYTHLPLPDTLPSTPLYFMHHSLMYFSPSQIAGLFLAAPFLERLYASLVLPAESTIGSHPFFPSLYRYRTTGEHLHYVLEGNPSSSYTQPLTATQWLTTSSITAGDLHLTVTVLESWFSVHSILITRGVRPLELPRDIISLPSPDAVLLPNPSAFDIPLRSRLVPRDVCESLFVYVRAVRTLRTTDPAGFIRTQSNKAEFDWVTAEAWDHLAQFALLTAPVRPNTYFLPLLSPLAVVRHWLFRKQRPIFATLTLLSASTAAAIPIAIARLRTHSVTQLTILGHHFTPPKILARLPVALKRLIPKRLLPHLPSHLRPPPSWSPVFTLTFSELPKARFLTFPISGQTHTLLRQLHVPAILFAPQRPSRPLIFAGLLIGTVPVLYGAYRWFVSRFDPQTVYNRYSDLLHRPTWHLTFEREPLSCFPTPFLPHPSSHPRRARRLPPLPPAPPLPPQPPPPPPPQPSPHPPLFPASIPSPPPRPSSPPPPATSPASTPALTPIPAPKTAPPLTFPSPTLVAEPDAPVTARPSPLPLAPSRPFSELYPGHYADHSGSFFLQQPLVASSVPYPALDCLLVSCSAASGIPKEDLWATLCHIFPPSDLVSDLGLSTNHLTALAFTYQWLVTLRSGELVQRHGLLSAPFAFEITHTPPVPPATVGHFALSAPLTPTSACLTGGAPSPVISGPKASASLPRARFGPRPEAPRPPLTPPGFTPITEPTPATSPFALAALRFRLNRQPLPIRQVHAYSIALPRAKNLVSNLKNGFDGLVSSLPASDRTNLLPLIQALDHTADFPPARPPVGLIHIAGFAGCGKSYPIQQLLATQTFRHFRVVTPTTELRHEWKRALKLEGPSSWRVSTWETALAKRASVLVIDEVYKLPRGYLDLALLADPTVEFVIILGDPLQGSYNPTNPDSSNHRLIPEEDHLRPFIDFYCLWTRRLPRLVADFFGVPTTNPTRGHLAFASLNTTQSPLLVPSDSMARALTAGGHRAITYAASQGSTYPAPVHIFLDRNSNLVTNHVALVALTRSRSGVHFRPRAQDLPRHPQHLFTAFYKYAIDLLAHEADPSKPRPTPVDVTLLFQQQLRGLTILRDPSFSRITGGATHAFLAHAPLFTNLHGLRPTTFPDNLPTAPTYLARSLPYHQTESYPTSALPHRVFPASTTDWSAADDHPRVNPTFVAETRLPLQSELAPTLPSQPEPSPTYHSPATFETVYPGVDGEALARTFLAATDPLELEIFFRNNWSNQFPFINRPDTVACNPLTLVAPTHNQKQDPTLLHASLAKRLRFRDSTAPYTITAKDQALGYILYHSLQRAYCRSPEPVPFDPVLFASCIAENDFAQLTSKTQATIQANAFRSDPDWRHTFVRIFSKTQHKVNENSLFTSWKACQTLALMHDYLILVLGPVKKYQRILDSRDRPAHLYIHAGQTPHQLSEWCQNHLTPSVHLANDYTAFDQSQHGEAVVLEAWKMRRASIPEPFITLHVHVKTNIECQFGPLTCMRITGEPGTYDDNTDYNLAILYTQYLLHRTPVLVSGDDSLVDRVPPMNPSWPALAPLFALKPKPETSPFGLFCGYFVGPAGAVRAPRALFAKLAIALEDGSLPEKIASYVAEFSVGQSLGDSLWSLIPPELVIYQSACFDLICRHASPQLKLALRLGEVPDWGSLLSQLKLRFLTRPLFALLDAHTRVMVRTHKAHLLPSGHALHPSTEPFY.

Positions 77 to 103 are disordered; it reads HRPPPPCTRLTPRPPPPTPAPPSASTL. Over residues 80-98 the composition is skewed to pro residues; it reads PPPCTRLTPRPPPPTPAPP. The Alphavirus-like MT domain occupies 171-341; sequence TSYGHQSHPH…TQPLTATQWL (171 aa). The tract at residues 674 to 773 is disordered; it reads PSSHPRRARR…APVTARPSPL (100 aa). Pro residues-rich tracts occupy residues 685 to 731 and 740 to 753; these read PPLP…PPAT and TPIPAPKTAPPLTF. The region spanning 762 to 922 is the Peptidase C21 domain; it reads PDAPVTARPS…CLTGGAPSPV (161 aa). Catalysis depends on for protease activity residues Cys814 and His900. Positions 924-948 are disordered; that stretch reads SGPKASASLPRARFGPRPEAPRPPL. Positions 1017–1175 constitute a (+)RNA virus helicase ATP-binding domain; the sequence is DRTNLLPLIQ…HLRPFIDFYC (159 aa). 1048-1055 is a binding site for ATP; that stretch reads GFAGCGKS. One can recognise a (+)RNA virus helicase C-terminal domain in the interval 1176–1308; that stretch reads LWTRRLPRLV…DLLAHEADPS (133 aa). A RdRp catalytic domain is found at 1682-1788; that stretch reads SVHLANDYTA…DRVPPMNPSW (107 aa).

The protein belongs to the Tymoviridae non-structural replication polyprotein family. Specific enzymatic cleavages by the host yield mature proteins.

It carries out the reaction RNA(n) + a ribonucleoside 5'-triphosphate = RNA(n+1) + diphosphate. Acts as a cysteine protease, methyltransferase and deubiquitinase. The cysteine protease activity cleaves the polyprotein giving rise to mature proteins. The methyltransferase domain is probably involved in viral RNA capping. In terms of biological role, RNA-directed RNA polymerase is responsible for the replication and transcription of the genome. The protein is Non-structural replication polyprotein of Vitis vinifera (Grape).